A 235-amino-acid polypeptide reads, in one-letter code: Myb family transcription factor PHL12 (235 aa).

Over residues 1–12 (MMQSREEIRDDS) the composition is skewed to basic and acidic residues. The disordered stretch occupies residues 1-20 (MMQSREEIRDDSSSGLVLTT). The region spanning 20-80 (TDPKPRLRWT…HLQKFRLGKQ (61 aa)) is the HTH myb-type domain. Residues 51–76 (PKTIMRVMGVKGLTLYHLKSHLQKFR) constitute a DNA-binding region (H-T-H motif). The tract at residues 119–139 (RNMNEMQMEVQRRIEEEVVIE) is coiled coil.

This sequence belongs to the MYB-CC family. As to expression, expressed in phloem and/or cambium.

It is found in the nucleus. This chain is Myb family transcription factor PHL12, found in Arabidopsis thaliana (Mouse-ear cress).